We begin with the raw amino-acid sequence, 363 residues long: Probable transglycosylase BTH_I0986 (363 aa).

It belongs to the glycosyltransferase group 1 family. Glycosyltransferase 4 subfamily.

Its function is as follows. Probably a transglycosylase. Probably involved in synthesis of the outer membrane receptor for a cellular contact-dependent growth inhibition (CDI) system. In Burkholderia thailandensis (strain ATCC 700388 / DSM 13276 / CCUG 48851 / CIP 106301 / E264), this protein is Probable transglycosylase BTH_I0986.